The sequence spans 158 residues: NADH-quinone oxidoreductase subunit B (158 aa).

[4Fe-4S] cluster contacts are provided by Cys-36, Cys-37, Cys-101, and Cys-131.

Belongs to the complex I 20 kDa subunit family. As to quaternary structure, NDH-1 is composed of 14 different subunits. Subunits NuoB, C, D, E, F, and G constitute the peripheral sector of the complex. Requires [4Fe-4S] cluster as cofactor.

It is found in the cell inner membrane. The enzyme catalyses a quinone + NADH + 5 H(+)(in) = a quinol + NAD(+) + 4 H(+)(out). Functionally, NDH-1 shuttles electrons from NADH, via FMN and iron-sulfur (Fe-S) centers, to quinones in the respiratory chain. The immediate electron acceptor for the enzyme in this species is believed to be ubiquinone. Couples the redox reaction to proton translocation (for every two electrons transferred, four hydrogen ions are translocated across the cytoplasmic membrane), and thus conserves the redox energy in a proton gradient. This is NADH-quinone oxidoreductase subunit B from Francisella philomiragia subsp. philomiragia (strain ATCC 25017 / CCUG 19701 / FSC 153 / O#319-036).